The chain runs to 793 residues: Phenylalanine--tRNA ligase beta subunit (793 aa).

The 110-residue stretch at 39–148 (AGQFTHVIVA…DEAPIGMDLR (110 aa)) folds into the tRNA-binding domain. In terms of domain architecture, B5 spans 401-477 (PGTVSFLFDT…RLYGYDKLQA (77 aa)). Mg(2+) is bound by residues D455, D461, E464, and E465. Residues 698-792 (SKYPQIRRDL…LENEFSILLR (95 aa)) enclose the FDX-ACB domain.

It belongs to the phenylalanyl-tRNA synthetase beta subunit family. Type 1 subfamily. In terms of assembly, tetramer of two alpha and two beta subunits. It depends on Mg(2+) as a cofactor.

It is found in the cytoplasm. It carries out the reaction tRNA(Phe) + L-phenylalanine + ATP = L-phenylalanyl-tRNA(Phe) + AMP + diphosphate + H(+). The chain is Phenylalanine--tRNA ligase beta subunit from Legionella pneumophila (strain Paris).